Reading from the N-terminus, the 202-residue chain is Histone chaperone ASF1B (202 aa).

The segment at 1 to 156 (MAKVSVLNVA…TRFHINWDNN (156 aa)) is interaction with histone H3 and CHAF1B. Position 198 is a phosphoserine; by TLK2 (Ser198).

It belongs to the ASF1 family. As to quaternary structure, interacts with histone H3 (via C-terminus), including histone H3.1, H3.2 and H3.3, and histone H4; the interaction with H3 is direct. Interacts with the CHAF1A, CHAF1B and RBBP4 subunits of the CAF-1 complex. Interacts with HAT1, NASP and TAF1. Found in a soluble complex with NASP and histones H3 and H4; the interaction with NASP is probably indirect and mediated by H3-H4. Interacts with CDAN1. Found in a cytosolic complex with CDAN1, ASF1A, IPO4 and histones H3.1 and H4. Interacts with CREBBP. Post-translationally, phosphorylated by TLK2. Phosphorylated by TLK1. Highly expressed in germ cells. Restricted to premeiotic to meiotic stages during spermatogenesis.

It is found in the nucleus. Its subcellular location is the cytoplasm. The protein localises to the cytosol. In terms of biological role, histone chaperone that facilitates histone deposition and histone exchange and removal during nucleosome assembly and disassembly. Cooperates with chromatin assembly factor 1 (CAF-1) to promote replication-dependent chromatin assembly. Also involved in the nuclear import of the histone H3-H4 dimer together with importin-4 (IPO4): specifically recognizes and binds newly synthesized histones with the monomethylation of H3 'Lys-9' (H3K9me1) and diacetylation at 'Lys-5' and 'Lys-12' of H4 (H4K5ac and H4K12ac) marks in the cytosol. Does not participate in replication-independent nucleosome deposition which is mediated by ASF1A and HIRA. Required for gonad development. The chain is Histone chaperone ASF1B from Mus musculus (Mouse).